The sequence spans 227 residues: Ribose-5-phosphate isomerase A (227 aa).

Residues 28–31 (TGST), 81–84 (DGAD), and 94–97 (KGGG) each bind substrate. The active-site Proton acceptor is Glu103. Residue Lys121 participates in substrate binding.

It belongs to the ribose 5-phosphate isomerase family. Homodimer.

The enzyme catalyses aldehydo-D-ribose 5-phosphate = D-ribulose 5-phosphate. It functions in the pathway carbohydrate degradation; pentose phosphate pathway; D-ribose 5-phosphate from D-ribulose 5-phosphate (non-oxidative stage): step 1/1. Functionally, catalyzes the reversible conversion of ribose-5-phosphate to ribulose 5-phosphate. The sequence is that of Ribose-5-phosphate isomerase A from Caulobacter vibrioides (strain ATCC 19089 / CIP 103742 / CB 15) (Caulobacter crescentus).